Here is a 631-residue protein sequence, read N- to C-terminus: Phosphomethylpyrimidine synthase (631 aa).

Substrate contacts are provided by residues Asn239, Met268, Tyr297, His333, 353 to 355 (SRG), 394 to 397 (DGLR), and Glu433. A Zn(2+)-binding site is contributed by His437. Tyr460 contributes to the substrate binding site. His501 lines the Zn(2+) pocket. Residues Cys581, Cys584, and Cys589 each coordinate [4Fe-4S] cluster.

The protein belongs to the ThiC family. In terms of assembly, homodimer. The cofactor is [4Fe-4S] cluster.

The catalysed reaction is 5-amino-1-(5-phospho-beta-D-ribosyl)imidazole + S-adenosyl-L-methionine = 4-amino-2-methyl-5-(phosphooxymethyl)pyrimidine + CO + 5'-deoxyadenosine + formate + L-methionine + 3 H(+). It functions in the pathway cofactor biosynthesis; thiamine diphosphate biosynthesis. In terms of biological role, catalyzes the synthesis of the hydroxymethylpyrimidine phosphate (HMP-P) moiety of thiamine from aminoimidazole ribotide (AIR) in a radical S-adenosyl-L-methionine (SAM)-dependent reaction. The chain is Phosphomethylpyrimidine synthase from Salmonella paratyphi B (strain ATCC BAA-1250 / SPB7).